Consider the following 433-residue polypeptide: tRNA-2-methylthio-N(6)-dimethylallyladenosine synthase (433 aa).

The region spanning 3-118 (KKLFIQTLGC…ISRVIHQEKA (116 aa)) is the MTTase N-terminal domain. Positions 12, 49, 81, 150, 154, and 157 each coordinate [4Fe-4S] cluster. Residues 136–369 (SRNDYKAMVN…QARHKEILEE (234 aa)) enclose the Radical SAM core domain. The 62-residue stretch at 372–433 (QKEVGAIHSV…YRAFLIGEPL (62 aa)) folds into the TRAM domain.

Belongs to the methylthiotransferase family. MiaB subfamily. Monomer. The cofactor is [4Fe-4S] cluster.

It localises to the cytoplasm. The catalysed reaction is N(6)-dimethylallyladenosine(37) in tRNA + (sulfur carrier)-SH + AH2 + 2 S-adenosyl-L-methionine = 2-methylsulfanyl-N(6)-dimethylallyladenosine(37) in tRNA + (sulfur carrier)-H + 5'-deoxyadenosine + L-methionine + A + S-adenosyl-L-homocysteine + 2 H(+). Its function is as follows. Catalyzes the methylthiolation of N6-(dimethylallyl)adenosine (i(6)A), leading to the formation of 2-methylthio-N6-(dimethylallyl)adenosine (ms(2)i(6)A) at position 37 in tRNAs that read codons beginning with uridine. This chain is tRNA-2-methylthio-N(6)-dimethylallyladenosine synthase, found in Wolinella succinogenes (strain ATCC 29543 / DSM 1740 / CCUG 13145 / JCM 31913 / LMG 7466 / NCTC 11488 / FDC 602W) (Vibrio succinogenes).